A 405-amino-acid polypeptide reads, in one-letter code: MNILQFNVRLAEGGAAGVALDLHQRALQQGLASHFVYGYGKGGKESVSHQNYPQVIKHTPRMTAMANIALFRLFNRDLFGNFNELYRTITRTAGPVVLHFHVLHSYWLNLKSVVRFCEKVKNHKPDVTLVWTLHDHWSVTGRCAFTDGCEGWKTGCQKCPTLNNYPPVKIDRAHQLVAGKRQLFREMLALGCQFISPSQHVADAFNSLYGPGRCRIINNGIDMATEAILADLPPVRETQGKPKIAVVAHDLRYDGKTNQQLVREMMALGDKIELHTFGKFSPFTAGNVVNHGFETDKRKLMSALNQMDALVFSSRVDNYPLILCEALSIGVPVIATHSDAAREVLQKSGGKTVSEEEVLQLVQLSKPEIAQAIFGTTLAEFSQRSRAAYSGQQMLEEYVNFYQNL.

It participates in slime biogenesis; slime polysaccharide biosynthesis. This is Putative colanic acid biosynthesis glycosyl transferase WcaC (wcaC) from Escherichia coli (strain K12).